The sequence spans 231 residues: Phosphoheptose isomerase (231 aa).

Positions 35–190 constitute an SIS domain; that stretch reads LAAVLGGGGR…CAAFDAALER (156 aa). Position 50 to 52 (50 to 52) interacts with substrate; sequence NGG. 2 residues coordinate Zn(2+): H59 and E63. Residues E63, 92-93, 118-120, S123, and Q170 contribute to the substrate site; these read ND and STS. Zn(2+) contacts are provided by Q170 and H178. Low complexity-rich tracts occupy residues 197-206 and 214-225; these read AAGSAASTGR and ASTGRAAGAGRA. The tract at residues 197–231 is disordered; it reads AAGSAASTGRAARRERAASTGRAAGAGRAAQRKRR.

This sequence belongs to the SIS family. GmhA subfamily. Zn(2+) is required as a cofactor.

It is found in the cytoplasm. The catalysed reaction is 2 D-sedoheptulose 7-phosphate = D-glycero-alpha-D-manno-heptose 7-phosphate + D-glycero-beta-D-manno-heptose 7-phosphate. It participates in carbohydrate biosynthesis; D-glycero-D-manno-heptose 7-phosphate biosynthesis; D-glycero-alpha-D-manno-heptose 7-phosphate and D-glycero-beta-D-manno-heptose 7-phosphate from sedoheptulose 7-phosphate: step 1/1. Its function is as follows. Catalyzes the isomerization of sedoheptulose 7-phosphate in D-glycero-D-manno-heptose 7-phosphate. The sequence is that of Phosphoheptose isomerase from Streptomyces coelicolor (strain ATCC BAA-471 / A3(2) / M145).